The primary structure comprises 141 residues: HTH-type transcriptional repressor NsrR (141 aa).

The 128-residue stretch at Gln2–Lys129 folds into the HTH rrf2-type domain. Residues Ile28 to Arg51 constitute a DNA-binding region (H-T-H motif). [2Fe-2S] cluster contacts are provided by Cys91, Cys96, and Cys102.

[2Fe-2S] cluster is required as a cofactor.

Nitric oxide-sensitive repressor of genes involved in protecting the cell against nitrosative stress. May require iron for activity. This chain is HTH-type transcriptional repressor NsrR, found in Pectobacterium atrosepticum (strain SCRI 1043 / ATCC BAA-672) (Erwinia carotovora subsp. atroseptica).